The sequence spans 316 residues: uncharacterized protein (316 aa).

Belongs to the chlamydial CPn_0441/CT_007/TC_0275 family.

This is an uncharacterized protein from Chlamydia trachomatis serovar D (strain ATCC VR-885 / DSM 19411 / UW-3/Cx).